A 563-amino-acid chain; its full sequence is Phospholipase B-like protein F (563 aa).

An N-terminal signal peptide occupies residues 1 to 21 (MKIINSFVFIFVLLFVFNTNA). N85, N107, N118, N121, N208, N312, and N537 each carry an N-linked (GlcNAc...) asparagine glycan.

It belongs to the phospholipase B-like family.

It localises to the secreted. In terms of biological role, probable phospholipase. The chain is Phospholipase B-like protein F (plbF) from Dictyostelium discoideum (Social amoeba).